The sequence spans 93 residues: Large ribosomal subunit protein uL23 (93 aa).

Belongs to the universal ribosomal protein uL23 family. As to quaternary structure, part of the 50S ribosomal subunit. Contacts protein L29, and trigger factor when it is bound to the ribosome.

One of the early assembly proteins it binds 23S rRNA. One of the proteins that surrounds the polypeptide exit tunnel on the outside of the ribosome. Forms the main docking site for trigger factor binding to the ribosome. This chain is Large ribosomal subunit protein uL23, found in Campylobacter jejuni subsp. jejuni serotype O:2 (strain ATCC 700819 / NCTC 11168).